A 1399-amino-acid chain; its full sequence is DNA-directed RNA polymerase subunit beta' (1399 aa).

Zn(2+)-binding residues include Cys-70, Cys-72, Cys-85, and Cys-88. Positions 460, 462, and 464 each coordinate Mg(2+). Zn(2+)-binding residues include Cys-814, Cys-888, Cys-895, and Cys-898.

The protein belongs to the RNA polymerase beta' chain family. As to quaternary structure, the RNAP catalytic core consists of 2 alpha, 1 beta, 1 beta' and 1 omega subunit. When a sigma factor is associated with the core the holoenzyme is formed, which can initiate transcription. Requires Mg(2+) as cofactor. The cofactor is Zn(2+).

It carries out the reaction RNA(n) + a ribonucleoside 5'-triphosphate = RNA(n+1) + diphosphate. Functionally, DNA-dependent RNA polymerase catalyzes the transcription of DNA into RNA using the four ribonucleoside triphosphates as substrates. This is DNA-directed RNA polymerase subunit beta' from Pseudomonas fluorescens (strain ATCC BAA-477 / NRRL B-23932 / Pf-5).